We begin with the raw amino-acid sequence, 349 residues long: Carbamoyl phosphate synthase small chain (349 aa).

The tract at residues 1–170 (MKAKLILENG…KYEISGEGKK (170 aa)) is CPSase. 3 residues coordinate L-glutamine: serine 45, glycine 218, and glycine 220. The 180-residue stretch at 170–349 (KVAIIDFGIK…IFDEFMKYAL (180 aa)) folds into the Glutamine amidotransferase type-1 domain. The Nucleophile role is filled by cysteine 245. L-glutamine is bound by residues leucine 246, glutamine 249, asparagine 287, glycine 289, and tyrosine 290. Catalysis depends on residues histidine 327 and glutamate 329.

Belongs to the CarA family. In terms of assembly, composed of two chains; the small (or glutamine) chain promotes the hydrolysis of glutamine to ammonia, which is used by the large (or ammonia) chain to synthesize carbamoyl phosphate. Tetramer of heterodimers (alpha,beta)4.

The catalysed reaction is hydrogencarbonate + L-glutamine + 2 ATP + H2O = carbamoyl phosphate + L-glutamate + 2 ADP + phosphate + 2 H(+). It catalyses the reaction L-glutamine + H2O = L-glutamate + NH4(+). It participates in amino-acid biosynthesis; L-arginine biosynthesis; carbamoyl phosphate from bicarbonate: step 1/1. It functions in the pathway pyrimidine metabolism; UMP biosynthesis via de novo pathway; (S)-dihydroorotate from bicarbonate: step 1/3. In terms of biological role, small subunit of the glutamine-dependent carbamoyl phosphate synthetase (CPSase). CPSase catalyzes the formation of carbamoyl phosphate from the ammonia moiety of glutamine, carbonate, and phosphate donated by ATP, constituting the first step of 2 biosynthetic pathways, one leading to arginine and/or urea and the other to pyrimidine nucleotides. The small subunit (glutamine amidotransferase) binds and cleaves glutamine to supply the large subunit with the substrate ammonia. The polypeptide is Carbamoyl phosphate synthase small chain (Clostridium perfringens (strain 13 / Type A)).